The primary structure comprises 292 residues: High-affinity heme uptake system protein IsdE (292 aa).

A signal peptide spans Met-1–Ser-19. Cys-20 carries N-palmitoyl cysteine lipidation. Cys-20 is lipidated: S-diacylglycerol cysteine. The Fe/B12 periplasmic-binding domain maps to Arg-35 to Lys-291. Heme is bound by residues Val-41, Ala-42, Ser-60, Tyr-61, Met-78, and His-229.

Belongs to the bacterial solute-binding protein 8 family. It depends on heme b as a cofactor.

The protein localises to the cell membrane. Its function is as follows. Involved in heme (porphyrin) scavenging. Binds Fe(2+) and Fe(3+) heme but the largest fraction is Fe(2+) heme. Functions as a high-affinity heme binding protein and probably has a role in relaying heme-iron from cell wall-anchored isd proteins receptors to the probable permease IsdF. This Staphylococcus aureus (strain MRSA252) protein is High-affinity heme uptake system protein IsdE (isdE).